We begin with the raw amino-acid sequence, 493 residues long: Growth-regulating factor 8 (493 aa).

One can recognise a QLQ domain in the interval 149 to 184 (AFSEAQWHELERQRNIYKYMMASVPVPPELLTPFPK). Residues 243–287 (DLEPWRCKRTDGKKWRCSRNVIPDQKYCERHTHKSRPRSRKHVES) enclose the WRC domain. Short sequence motifs (bipartite nuclear localization signal) lie at residues 248–258 (RCKRTDGKKWR) and 276–283 (KSRPRSRK). The disordered stretch occupies residues 270 to 302 (CERHTHKSRPRSRKHVESSHQSSHHNDIRTAKN). A compositionally biased stretch (basic residues) spans 273–283 (HTHKSRPRSRK).

It belongs to the GRF family. Predominantly expressed in shoot tips and flowers.

It is found in the nucleus. In terms of biological role, transcription activator that plays a role in the regulation of cell expansion in leaf and cotyledons tissues. Component of a network formed by miR396, the GRFs and their interacting factors (GIFs) acting in the regulation of meristem function, at least partially through the control of cell proliferation. In Arabidopsis thaliana (Mouse-ear cress), this protein is Growth-regulating factor 8 (GRF8).